The sequence spans 325 residues: G/U mismatch-specific uracil DNA glycosylase (325 aa).

The span at Met-1–Thr-11 shows a compositional bias: basic and acidic residues. The interval Met-1–Ile-50 is disordered. The span at Lys-12–Val-23 shows a compositional bias: polar residues. Over residues Asp-34–Arg-43 the composition is skewed to acidic residues.

It belongs to the uracil-DNA glycosylase (UDG) superfamily. TDG/mug family.

It localises to the nucleus. It catalyses the reaction Specifically hydrolyzes mismatched double-stranded DNA and polynucleotides, releasing free uracil.. Its function is as follows. Removes uracil from G/U mispairs in ssDNA. Also corrects G/G mispairs. Does not catalyze the removal of thymine from G/T mispairs. This Schizosaccharomyces pombe (strain 972 / ATCC 24843) (Fission yeast) protein is G/U mismatch-specific uracil DNA glycosylase (thp1).